The primary structure comprises 145 residues: MRKFNVNVNGTVYTVEVEEVGGAVTAAPAAPAAPAAAPAAAPVAAAPAAAPAPAPAAAPAAAPAPAAKPAAAAPAGSVTVSAPMPGKILSVNVKPGDKVEAGDVLLILEAMKMQNEIMAPEDGTVSEVRVNAGDTVATGDVMVIL.

The disordered stretch occupies residues 52–82 (APAPAAAPAAAPAPAAKPAAAAPAGSVTVSA). Low complexity predominate over residues 57–75 (AAPAAAPAPAAKPAAAAPA). Residues 77–145 (SVTVSAPMPG…VATGDVMVIL (69 aa)) enclose the Biotinyl-binding domain. Lys-112 carries the post-translational modification N6-biotinyllysine.

In terms of assembly, heterooctamer consisting of two alpha, two beta, two gamma and two delta subunits. Biotin is required as a cofactor.

The catalysed reaction is (2E)-glutaconyl-CoA + Na(+)(in) + H(+) = (2E)-butenoyl-CoA + Na(+)(out) + CO2. The protein operates within amino-acid degradation; L-glutamate degradation via hydroxyglutarate pathway; crotonoyl-CoA from L-glutamate: step 5/5. Functionally, biotin carrier subunit of the primary sodium pump glutaconyl-CoA decarboxylase (GCD). This Acidaminococcus fermentans (strain ATCC 25085 / DSM 20731 / CCUG 9996 / CIP 106432 / VR4) protein is Glutaconyl-CoA decarboxylase subunit gamma (gcdC).